Here is a 398-residue protein sequence, read N- to C-terminus: Dual-specificity RNA methyltransferase RlmN (398 aa).

The active-site Proton acceptor is the Glu-119. Positions 125-364 constitute a Radical SAM core domain; that stretch reads EGDRATLCVS…TIVRKTRGDD (240 aa). A disulfide bond links Cys-132 and Cys-369. 3 residues coordinate [4Fe-4S] cluster: Cys-139, Cys-143, and Cys-146. S-adenosyl-L-methionine-binding positions include 193 to 194, Ser-225, 247 to 249, and Asn-326; these read GE and SLH. Residue Cys-369 is the S-methylcysteine intermediate of the active site.

This sequence belongs to the radical SAM superfamily. RlmN family. It depends on [4Fe-4S] cluster as a cofactor.

It is found in the cytoplasm. The enzyme catalyses adenosine(2503) in 23S rRNA + 2 reduced [2Fe-2S]-[ferredoxin] + 2 S-adenosyl-L-methionine = 2-methyladenosine(2503) in 23S rRNA + 5'-deoxyadenosine + L-methionine + 2 oxidized [2Fe-2S]-[ferredoxin] + S-adenosyl-L-homocysteine. It carries out the reaction adenosine(37) in tRNA + 2 reduced [2Fe-2S]-[ferredoxin] + 2 S-adenosyl-L-methionine = 2-methyladenosine(37) in tRNA + 5'-deoxyadenosine + L-methionine + 2 oxidized [2Fe-2S]-[ferredoxin] + S-adenosyl-L-homocysteine. Specifically methylates position 2 of adenine 2503 in 23S rRNA and position 2 of adenine 37 in tRNAs. m2A2503 modification seems to play a crucial role in the proofreading step occurring at the peptidyl transferase center and thus would serve to optimize ribosomal fidelity. The protein is Dual-specificity RNA methyltransferase RlmN of Yersinia enterocolitica serotype O:8 / biotype 1B (strain NCTC 13174 / 8081).